The chain runs to 237 residues: MIIYPAVDIKDGRCVRLVQGEFDKVTVYSDNPVEMGLKWERMGAQYLHVVDLDGARTGQIQNTPIISEMAVKLGIPVQLGGGIRTVETIETLLCKGIHRVILGTSAVKNPELVKQALKTFEDSVVIGIDAKDGMVAIEGWAKTSEFTAIGFAKKMEELGAKTIIYTDISRDGMLAGPNLKAMEEMVKAVNIEVIASGGVRNIDDIRNLKNVGVSGVIVGKALYTGDLDLKEAIEVAK.

The active-site Proton acceptor is the Asp-8. The active-site Proton donor is Asp-129.

It belongs to the HisA/HisF family.

The protein resides in the cytoplasm. It carries out the reaction 1-(5-phospho-beta-D-ribosyl)-5-[(5-phospho-beta-D-ribosylamino)methylideneamino]imidazole-4-carboxamide = 5-[(5-phospho-1-deoxy-D-ribulos-1-ylimino)methylamino]-1-(5-phospho-beta-D-ribosyl)imidazole-4-carboxamide. It functions in the pathway amino-acid biosynthesis; L-histidine biosynthesis; L-histidine from 5-phospho-alpha-D-ribose 1-diphosphate: step 4/9. This Acetivibrio thermocellus (strain ATCC 27405 / DSM 1237 / JCM 9322 / NBRC 103400 / NCIMB 10682 / NRRL B-4536 / VPI 7372) (Clostridium thermocellum) protein is 1-(5-phosphoribosyl)-5-[(5-phosphoribosylamino)methylideneamino] imidazole-4-carboxamide isomerase.